A 479-amino-acid chain; its full sequence is Probable periplasmic serine endoprotease DegP-like (479 aa).

The signal sequence occupies residues 1–27 (MSIPRLKSYLSMFAAVLMLGQVLSAQA). Active-site charge relay system residues include histidine 117, aspartate 147, and serine 220. Residues 218–220 (GNS) and 275–279 (LGVVI) each bind substrate. 2 PDZ domains span residues 264-355 (LKKD…IRNG) and 361-468 (DVTI…LRQG). The segment at 368-395 (PDDDADIGTGTGADGSAERSSNRLGVSV) is disordered.

Belongs to the peptidase S1C family.

Its subcellular location is the periplasm. The catalysed reaction is Acts on substrates that are at least partially unfolded. The cleavage site P1 residue is normally between a pair of hydrophobic residues, such as Val-|-Val.. Its function is as follows. Might be efficient in the degradation of transiently denatured and unfolded proteins which accumulate in the periplasm following stress conditions. In Pseudomonas putida (strain W619), this protein is Probable periplasmic serine endoprotease DegP-like.